We begin with the raw amino-acid sequence, 192 residues long: Large ribosomal subunit protein uL5 (192 aa).

Belongs to the universal ribosomal protein uL5 family. In terms of assembly, part of the 50S ribosomal subunit; part of the 5S rRNA/L5/L18/L25 subcomplex. Contacts the 5S rRNA and the P site tRNA. Forms a bridge to the 30S subunit in the 70S ribosome.

This is one of the proteins that bind and probably mediate the attachment of the 5S RNA into the large ribosomal subunit, where it forms part of the central protuberance. In the 70S ribosome it contacts protein S13 of the 30S subunit (bridge B1b), connecting the 2 subunits; this bridge is implicated in subunit movement. Contacts the P site tRNA; the 5S rRNA and some of its associated proteins might help stabilize positioning of ribosome-bound tRNAs. The sequence is that of Large ribosomal subunit protein uL5 from Paenarthrobacter aurescens (strain TC1).